The chain runs to 530 residues: Formate--tetrahydrofolate ligase (530 aa).

46-53 (TPEGEGKT) serves as a coordination point for ATP.

Belongs to the formate--tetrahydrofolate ligase family.

It catalyses the reaction (6S)-5,6,7,8-tetrahydrofolate + formate + ATP = (6R)-10-formyltetrahydrofolate + ADP + phosphate. The protein operates within one-carbon metabolism; tetrahydrofolate interconversion. In Malacoplasma penetrans (strain HF-2) (Mycoplasma penetrans), this protein is Formate--tetrahydrofolate ligase.